Here is a 427-residue protein sequence, read N- to C-terminus: Histidinol dehydrogenase (427 aa).

The NAD(+) site is built by Tyr123, Gln185, and Asn208. The substrate site is built by Ser231, Gln253, and His256. Zn(2+)-binding residues include Gln253 and His256. Catalysis depends on proton acceptor residues Glu321 and His322. Substrate contacts are provided by His322, Asp355, Glu409, and His414. Asp355 is a Zn(2+) binding site. His414 contributes to the Zn(2+) binding site.

The protein belongs to the histidinol dehydrogenase family. Requires Zn(2+) as cofactor.

The catalysed reaction is L-histidinol + 2 NAD(+) + H2O = L-histidine + 2 NADH + 3 H(+). It functions in the pathway amino-acid biosynthesis; L-histidine biosynthesis; L-histidine from 5-phospho-alpha-D-ribose 1-diphosphate: step 9/9. In terms of biological role, catalyzes the sequential NAD-dependent oxidations of L-histidinol to L-histidinaldehyde and then to L-histidine. The protein is Histidinol dehydrogenase (hisD) of Bacillus subtilis (strain 168).